A 145-amino-acid chain; its full sequence is Hemoglobin subunit beta-A (145 aa).

Residues 1–145 (MLTAEEKAAV…VANALAHRYH (145 aa)) form the Globin domain. Heme b is bound by residues His-62 and His-91.

The protein belongs to the globin family. As to quaternary structure, heterotetramer of two alpha chains and two beta chains. Red blood cells.

Functionally, involved in oxygen transport from the lung to the various peripheral tissues. The protein is Hemoglobin subunit beta-A of Bos javanicus (Wild banteng).